Reading from the N-terminus, the 379-residue chain is Glutamate 5-kinase (379 aa).

ATP is bound at residue lysine 15. Substrate is bound by residues serine 59, aspartate 146, and asparagine 158. Residue 178 to 179 coordinates ATP; that stretch reads TD. Positions 285–363 constitute a PUA domain; it reads RGAVTVDVGA…SEFERLLGYS (79 aa).

The protein belongs to the glutamate 5-kinase family.

Its subcellular location is the cytoplasm. It catalyses the reaction L-glutamate + ATP = L-glutamyl 5-phosphate + ADP. It participates in amino-acid biosynthesis; L-proline biosynthesis; L-glutamate 5-semialdehyde from L-glutamate: step 1/2. Catalyzes the transfer of a phosphate group to glutamate to form L-glutamate 5-phosphate. This is Glutamate 5-kinase from Paracidovorax citrulli (strain AAC00-1) (Acidovorax citrulli).